The following is a 443-amino-acid chain: Xaa-Pro dipeptidase (443 aa).

Mn(2+)-binding residues include Asp-246, Asp-257, His-339, Glu-384, and Glu-423.

The protein belongs to the peptidase M24B family. Bacterial-type prolidase subfamily. Requires Mn(2+) as cofactor.

It carries out the reaction Xaa-L-Pro dipeptide + H2O = an L-alpha-amino acid + L-proline. Its function is as follows. Splits dipeptides with a prolyl residue in the C-terminal position. In Edwardsiella ictaluri (strain 93-146), this protein is Xaa-Pro dipeptidase.